We begin with the raw amino-acid sequence, 156 residues long: Small ribosomal subunit protein eS19A (156 aa).

The protein belongs to the eukaryotic ribosomal protein eS19 family.

This is Small ribosomal subunit protein eS19A (RpS19a) from Drosophila melanogaster (Fruit fly).